A 636-amino-acid chain; its full sequence is Carbon monoxide dehydrogenase 2 (636 aa).

Residues C39, C47, C48, C51, C56, and C70 each coordinate [4Fe-4S] cluster. [Ni-4Fe-5S] cluster contacts are provided by H261, C295, C333, C446, C476, and C526.

The protein belongs to the Ni-containing carbon monoxide dehydrogenase family. As to quaternary structure, homodimer. Requires [4Fe-4S] cluster as cofactor. It depends on [Ni-4Fe-5S] cluster as a cofactor.

It is found in the cytoplasm. The protein localises to the cell membrane. The catalysed reaction is CO + 2 oxidized [2Fe-2S]-[ferredoxin] + H2O = 2 reduced [2Fe-2S]-[ferredoxin] + CO2 + 2 H(+). Inactivated by O(2). Functionally, CODH oxidizes carbon monoxide coupled, via CooF, to the reduction of a hydrogen cation by a hydrogenase (possibly CooH). This Carboxydothermus hydrogenoformans (strain ATCC BAA-161 / DSM 6008 / Z-2901) protein is Carbon monoxide dehydrogenase 2 (cooS2).